The chain runs to 367 residues: Phosphoribosylaminoimidazole-succinocarboxamide synthase (367 aa).

Belongs to the SAICAR synthetase family.

It catalyses the reaction 5-amino-1-(5-phospho-D-ribosyl)imidazole-4-carboxylate + L-aspartate + ATP = (2S)-2-[5-amino-1-(5-phospho-beta-D-ribosyl)imidazole-4-carboxamido]succinate + ADP + phosphate + 2 H(+). It participates in purine metabolism; IMP biosynthesis via de novo pathway; 5-amino-1-(5-phospho-D-ribosyl)imidazole-4-carboxamide from 5-amino-1-(5-phospho-D-ribosyl)imidazole-4-carboxylate: step 1/2. This Shewanella piezotolerans (strain WP3 / JCM 13877) protein is Phosphoribosylaminoimidazole-succinocarboxamide synthase.